We begin with the raw amino-acid sequence, 324 residues long: DNA repair and recombination protein RadA (324 aa).

114–121 (GEFGSGKT) is a binding site for ATP.

It belongs to the eukaryotic RecA-like protein family.

Functionally, involved in DNA repair and in homologous recombination. Binds and assemble on single-stranded DNA to form a nucleoprotein filament. Hydrolyzes ATP in a ssDNA-dependent manner and promotes DNA strand exchange between homologous DNA molecules. The chain is DNA repair and recombination protein RadA from Saccharolobus islandicus (strain Y.N.15.51 / Yellowstone #2) (Sulfolobus islandicus).